The sequence spans 361 residues: Tetrathionate reductase subunit C (361 aa).

The next 9 helical transmembrane spans lie at 26–46, 53–73, 104–124, 160–180, 193–213, 233–253, 258–278, 288–308, and 334–354; these read FSYALLISGADLLLLAALALL, AIPMFLILGLSFFSVILLGPL, ALYGGLLWPLTFIVALIFALL, LAAILVPLSALWTIYPGMLFF, LMLPMFFGETFITATGTALIL, GAAAIALAGVLILQMFIWGMW, FAAVVPMMQAAAVIFLLTFIL, ITPIVPVLALFGVVVNKWNLI, and AVSPIALAILLLVILSYIFPM.

Belongs to the NrfD family. As to quaternary structure, probably composed of three subunits: TtrA, TtrB and TtrC.

The protein resides in the cell membrane. Functionally, part of a membrane-bound tetrathionate reductase that catalyzes the reduction of tetrathionate to thiosulfate. TtrC probably anchors TtrA and TtrB to the external face of the cytoplasmic membrane. May transfer electrons from membrane quinol to TtrB. In Archaeoglobus fulgidus (strain ATCC 49558 / DSM 4304 / JCM 9628 / NBRC 100126 / VC-16), this protein is Tetrathionate reductase subunit C (ttrC).